A 218-amino-acid chain; its full sequence is Pyridoxine/pyridoxamine 5'-phosphate oxidase (218 aa).

Substrate contacts are provided by residues 12-15 and Arg70; that span reads RLSY. Residues 65 to 70, 80 to 81, Lys87, and Gln109 each bind FMN; these read RTVLLR and YT. The substrate site is built by Tyr127, Arg131, and Ser135. FMN is bound by residues 145 to 146 and Trp191; that span reads QS. 197–199 serves as a coordination point for substrate; the sequence is RLH. Arg201 contacts FMN.

Belongs to the pyridoxamine 5'-phosphate oxidase family. Homodimer. Requires FMN as cofactor.

The catalysed reaction is pyridoxamine 5'-phosphate + O2 + H2O = pyridoxal 5'-phosphate + H2O2 + NH4(+). It catalyses the reaction pyridoxine 5'-phosphate + O2 = pyridoxal 5'-phosphate + H2O2. It participates in cofactor metabolism; pyridoxal 5'-phosphate salvage; pyridoxal 5'-phosphate from pyridoxamine 5'-phosphate: step 1/1. Its pathway is cofactor metabolism; pyridoxal 5'-phosphate salvage; pyridoxal 5'-phosphate from pyridoxine 5'-phosphate: step 1/1. Catalyzes the oxidation of either pyridoxine 5'-phosphate (PNP) or pyridoxamine 5'-phosphate (PMP) into pyridoxal 5'-phosphate (PLP). The sequence is that of Pyridoxine/pyridoxamine 5'-phosphate oxidase from Acinetobacter baumannii (strain AB0057).